We begin with the raw amino-acid sequence, 507 residues long: Probable aldehyde dehydrogenase (507 aa).

219 to 225 (GFGAEAG) serves as a coordination point for NAD(+). Catalysis depends on residues Glu263 and Cys302.

The protein belongs to the aldehyde dehydrogenase family.

The enzyme catalyses an aldehyde + NAD(+) + H2O = a carboxylate + NADH + 2 H(+). This is Probable aldehyde dehydrogenase from Mycobacterium bovis (strain ATCC BAA-935 / AF2122/97).